A 147-amino-acid polypeptide reads, in one-letter code: Lysozyme C (147 aa).

An N-terminal signal peptide occupies residues 1–17 (MRSLLILVLCFLPLAAP). Residues 19 to 147 (KVYGRCELAA…VNVWIRGCRL (129 aa)) form the C-type lysozyme domain. 4 disulfides stabilise this stretch: cysteine 24–cysteine 145, cysteine 48–cysteine 133, cysteine 82–cysteine 98, and cysteine 94–cysteine 112. Catalysis depends on residues glutamate 53 and aspartate 70.

It belongs to the glycosyl hydrolase 22 family. In terms of assembly, monomer. In terms of processing, by an evolutionary shift in the site of proteolytic cleavage of prelysozyme, Gly-18 became the N-terminal residue of the mature protein instead of being the C-terminal residue of the signal sequence as in other birds.

It localises to the secreted. It carries out the reaction Hydrolysis of (1-&gt;4)-beta-linkages between N-acetylmuramic acid and N-acetyl-D-glucosamine residues in a peptidoglycan and between N-acetyl-D-glucosamine residues in chitodextrins.. Its function is as follows. Lysozymes have primarily a bacteriolytic function; those in tissues and body fluids are associated with the monocyte-macrophage system and enhance the activity of immunoagents. The protein is Lysozyme C (LYZ) of Phasianus colchicus colchicus (Black-necked pheasant).